Reading from the N-terminus, the 74-residue chain is Conotoxin Cal27 (74 aa).

Residues 1–19 (MSGTGVLLLTLLLLVAMAA) form the signal peptide.

May contain 4 disulfide bonds. In terms of tissue distribution, expressed by the venom duct.

It is found in the secreted. In terms of biological role, probable neurotoxin. The polypeptide is Conotoxin Cal27 (Californiconus californicus (California cone)).